Reading from the N-terminus, the 56-residue chain is Large ribosomal subunit protein bL32 (56 aa).

It belongs to the bacterial ribosomal protein bL32 family.

The sequence is that of Large ribosomal subunit protein bL32 from Brevibacillus brevis (strain 47 / JCM 6285 / NBRC 100599).